We begin with the raw amino-acid sequence, 501 residues long: Aldehyde dehydrogenase, cytosolic 1 (501 aa).

At S2 the chain carries N-acetylserine. N6-acetyllysine is present on residues K91 and K128. 246–251 provides a ligand contact to NAD(+); it reads GSTEVG. An N6-acetyllysine modification is found at K252. E269 functions as the Proton acceptor in the catalytic mechanism. C303 acts as the Nucleophile in catalysis. N6-acetyllysine is present on residues K353, K367, and K410. S413 carries the phosphoserine modification. N6-acetyllysine occurs at positions 419, 435, and 495.

This sequence belongs to the aldehyde dehydrogenase family. Homotetramer. In terms of tissue distribution, very low levels in lung and liver.

It is found in the cytoplasm. It carries out the reaction an aldehyde + NAD(+) + H2O = a carboxylate + NADH + 2 H(+). It functions in the pathway alcohol metabolism; ethanol degradation; acetate from ethanol: step 2/2. Can oxidize benzaldehyde, propionaldehyde and acetaldehyde. No detectable activity with retinal. In Rattus norvegicus (Rat), this protein is Aldehyde dehydrogenase, cytosolic 1 (Aldh1a7).